We begin with the raw amino-acid sequence, 65 residues long: MRIVYLLLPFILLLAQGAAGSSQALGRKSDCFRKSGFCAFLKCPSLTLISGKCSRFYLCCKRIWG.

A signal peptide spans 1-19 (MRIVYLLLPFILLLAQGAA). Positions 20–25 (GSSQAL) are excised as a propeptide. 3 cysteine pairs are disulfide-bonded: Cys31–Cys59, Cys38–Cys53, and Cys43–Cys60.

It belongs to the beta-defensin family. As to expression, strong expression in the bone marrow, lung, testis. Moderate expression in the bursa and intestine. Low expression in the cloaca, gall bladder, brain and pancreas. Expressed in the vagina, ovarian stroma and the theca and granulosa layers of the ovarian follicle.

Its subcellular location is the secreted. It localises to the cytoplasmic granule. In terms of biological role, has bactericidal activity. Potent activity against E.coli ML-35, L.monocytogenes EGD and C.albicans. The protein is Gallinacin-1 (GAL1) of Gallus gallus (Chicken).